The primary structure comprises 233 residues: MRVTALVPAAGMGKRMGADINKQYLLLEGKPILAHTLAVFELAPFVDDIYVITPEAEIPYCREHVVEQFGFTKVRGVVAGGKERQNSVLNGLRAIDASDEDDVVLIHDGVRPFIPTAVLKRSVEVATAEDGALVAVPAKDTIKTVEAGIVTGTPPRENIWLAQTPQTFRYGIIRAAHELAAAEGFLGTDDASLVERLGRQVHVVMGDYRNIKITTPEDMLLAEAFLKSVNSER.

The protein belongs to the IspD/TarI cytidylyltransferase family. IspD subfamily.

The enzyme catalyses 2-C-methyl-D-erythritol 4-phosphate + CTP + H(+) = 4-CDP-2-C-methyl-D-erythritol + diphosphate. It participates in isoprenoid biosynthesis; isopentenyl diphosphate biosynthesis via DXP pathway; isopentenyl diphosphate from 1-deoxy-D-xylulose 5-phosphate: step 2/6. In terms of biological role, catalyzes the formation of 4-diphosphocytidyl-2-C-methyl-D-erythritol from CTP and 2-C-methyl-D-erythritol 4-phosphate (MEP). The protein is 2-C-methyl-D-erythritol 4-phosphate cytidylyltransferase of Geotalea uraniireducens (strain Rf4) (Geobacter uraniireducens).